The primary structure comprises 229 residues: Uracil-DNA glycosylase (229 aa).

Catalysis depends on Asp70, which acts as the Proton acceptor.

The protein belongs to the uracil-DNA glycosylase (UDG) superfamily. UNG family.

The protein localises to the cytoplasm. It catalyses the reaction Hydrolyzes single-stranded DNA or mismatched double-stranded DNA and polynucleotides, releasing free uracil.. Its function is as follows. Excises uracil residues from the DNA which can arise as a result of misincorporation of dUMP residues by DNA polymerase or due to deamination of cytosine. This is Uracil-DNA glycosylase from Chlamydia abortus (strain DSM 27085 / S26/3) (Chlamydophila abortus).